Reading from the N-terminus, the 316-residue chain is Cell division protein FtsQ (316 aa).

The tract at residues 1 to 34 is disordered; sequence MAKAARRTKSAPARRSPRRHARQTGATIRRPKRP. The Cytoplasmic portion of the chain corresponds to 1–61; sequence MAKAARRTKS…HPLLKQMAKR (61 aa). The chain crosses the membrane as a helical span at residues 62–80; that stretch reads LLLILVIVGFLAGLWAARW. The Periplasmic segment spans residues 81-316; that stretch reads PQLLATKTGE…AADPLVSDRI (236 aa). Residues 97-165 form the POTRA domain; that stretch reads FSVRHVEIVG…DTLVVDIVER (69 aa). The tract at residues 295–316 is disordered; sequence PEPVKKATKPAKAADPLVSDRI.

It belongs to the FtsQ/DivIB family. FtsQ subfamily.

It is found in the cell inner membrane. Its function is as follows. Essential cell division protein. The polypeptide is Cell division protein FtsQ (Zymomonas mobilis subsp. mobilis (strain ATCC 31821 / ZM4 / CP4)).